A 643-amino-acid polypeptide reads, in one-letter code: 1-deoxy-D-xylulose-5-phosphate synthase (643 aa).

Thiamine diphosphate contacts are provided by residues histidine 78 and 119–121; that span reads AHS. Residue aspartate 150 coordinates Mg(2+). Residues 151–152, asparagine 179, tyrosine 288, and glutamate 370 each bind thiamine diphosphate; that span reads GS. Mg(2+) is bound at residue asparagine 179.

The protein belongs to the transketolase family. DXPS subfamily. As to quaternary structure, homodimer. Mg(2+) serves as cofactor. Thiamine diphosphate is required as a cofactor.

It catalyses the reaction D-glyceraldehyde 3-phosphate + pyruvate + H(+) = 1-deoxy-D-xylulose 5-phosphate + CO2. It participates in metabolic intermediate biosynthesis; 1-deoxy-D-xylulose 5-phosphate biosynthesis; 1-deoxy-D-xylulose 5-phosphate from D-glyceraldehyde 3-phosphate and pyruvate: step 1/1. Its function is as follows. Catalyzes the acyloin condensation reaction between C atoms 2 and 3 of pyruvate and glyceraldehyde 3-phosphate to yield 1-deoxy-D-xylulose-5-phosphate (DXP). This chain is 1-deoxy-D-xylulose-5-phosphate synthase, found in Brucella melitensis biotype 2 (strain ATCC 23457).